The primary structure comprises 199 residues: 3-isopropylmalate dehydratase small subunit (199 aa).

The protein belongs to the LeuD family. LeuD type 1 subfamily. Heterodimer of LeuC and LeuD.

The catalysed reaction is (2R,3S)-3-isopropylmalate = (2S)-2-isopropylmalate. Its pathway is amino-acid biosynthesis; L-leucine biosynthesis; L-leucine from 3-methyl-2-oxobutanoate: step 2/4. Functionally, catalyzes the isomerization between 2-isopropylmalate and 3-isopropylmalate, via the formation of 2-isopropylmaleate. This chain is 3-isopropylmalate dehydratase small subunit, found in Mycobacteroides abscessus (strain ATCC 19977 / DSM 44196 / CCUG 20993 / CIP 104536 / JCM 13569 / NCTC 13031 / TMC 1543 / L948) (Mycobacterium abscessus).